Here is a 163-residue protein sequence, read N- to C-terminus: Shikimate kinase (163 aa).

10–15 (GVGKTT) provides a ligand contact to ATP. Threonine 14 contacts Mg(2+). Residues aspartate 28, arginine 52, and glycine 75 each coordinate substrate. Residue arginine 116 participates in ATP binding. Residue arginine 134 participates in substrate binding. Position 151 (arginine 151) interacts with ATP.

It belongs to the shikimate kinase family. As to quaternary structure, monomer. Mg(2+) is required as a cofactor.

It localises to the cytoplasm. It catalyses the reaction shikimate + ATP = 3-phosphoshikimate + ADP + H(+). Its pathway is metabolic intermediate biosynthesis; chorismate biosynthesis; chorismate from D-erythrose 4-phosphate and phosphoenolpyruvate: step 5/7. Its function is as follows. Catalyzes the specific phosphorylation of the 3-hydroxyl group of shikimic acid using ATP as a cosubstrate. The sequence is that of Shikimate kinase from Streptococcus pyogenes serotype M49 (strain NZ131).